Here is a 117-residue protein sequence, read N- to C-terminus: UPF0344 protein GWCH70_0687 (117 aa).

The next 4 helical transmembrane spans lie at 2–22 (THAH…AVSL), 32–52 (IVQM…GLLL), 55–75 (IASI…LIGA), and 97–117 (IVAF…FDLF).

Belongs to the UPF0344 family.

Its subcellular location is the cell membrane. This is UPF0344 protein GWCH70_0687 from Geobacillus sp. (strain WCH70).